Here is a 158-residue protein sequence, read N- to C-terminus: Cyclic pyranopterin monophosphate synthase (158 aa).

Residues 75–77 and 113–114 contribute to the substrate site; these read LCH and ME. Residue D128 is part of the active site.

It belongs to the MoaC family. In terms of assembly, homohexamer; trimer of dimers.

It catalyses the reaction (8S)-3',8-cyclo-7,8-dihydroguanosine 5'-triphosphate = cyclic pyranopterin phosphate + diphosphate. It functions in the pathway cofactor biosynthesis; molybdopterin biosynthesis. Catalyzes the conversion of (8S)-3',8-cyclo-7,8-dihydroguanosine 5'-triphosphate to cyclic pyranopterin monophosphate (cPMP). In Paraburkholderia xenovorans (strain LB400), this protein is Cyclic pyranopterin monophosphate synthase.